We begin with the raw amino-acid sequence, 154 residues long: Fluoride-specific ion channel FluC 1 (154 aa).

The next 4 membrane-spanning stretches (helical) occupy residues 28–48 (VVAV…AASL), 59–79 (WTTF…MVVI), 91–111 (PFFG…AVDS), and 124–144 (LAYL…AAWA). G99 and T102 together coordinate Na(+).

This sequence belongs to the fluoride channel Fluc/FEX (TC 1.A.43) family.

Its subcellular location is the cell membrane. The enzyme catalyses fluoride(in) = fluoride(out). Na(+) is not transported, but it plays an essential structural role and its presence is essential for fluoride channel function. Its function is as follows. Fluoride-specific ion channel. Important for reducing fluoride concentration in the cell, thus reducing its toxicity. The chain is Fluoride-specific ion channel FluC 1 from Streptomyces coelicolor (strain ATCC BAA-471 / A3(2) / M145).